Reading from the N-terminus, the 415-residue chain is Tyrosine--tRNA ligase (415 aa).

An L-tyrosine-binding site is contributed by Tyr33. The 'HIGH' region motif lies at 38–47; that stretch reads PSGESLHLGN. Residues Tyr161 and Gln165 each contribute to the L-tyrosine site. The 'KMSKS' region motif lies at 225–229; sequence KFGKS. Lys228 serves as a coordination point for ATP. An S4 RNA-binding domain is found at 350 to 414; sequence MVIDFLLQAK…KKNYFIVVWK (65 aa).

The protein belongs to the class-I aminoacyl-tRNA synthetase family. TyrS type 1 subfamily. In terms of assembly, homodimer.

The protein localises to the cytoplasm. The enzyme catalyses tRNA(Tyr) + L-tyrosine + ATP = L-tyrosyl-tRNA(Tyr) + AMP + diphosphate + H(+). In terms of biological role, catalyzes the attachment of tyrosine to tRNA(Tyr) in a two-step reaction: tyrosine is first activated by ATP to form Tyr-AMP and then transferred to the acceptor end of tRNA(Tyr). The protein is Tyrosine--tRNA ligase of Mycoplasmoides gallisepticum (strain R(low / passage 15 / clone 2)) (Mycoplasma gallisepticum).